Here is a 110-residue protein sequence, read N- to C-terminus: Hydrogenase maturation factor HypA (110 aa).

His2 contributes to the Ni(2+) binding site. Zn(2+)-binding residues include Cys70, Cys73, Cys86, and Cys89.

The protein belongs to the HypA/HybF family.

In terms of biological role, involved in the maturation of [NiFe] hydrogenases. Required for nickel insertion into the metal center of the hydrogenase. This is Hydrogenase maturation factor HypA from Geobacter sp. (strain M21).